Reading from the N-terminus, the 20-residue chain is Large ribosomal subunit protein uL5 (20 aa).

It belongs to the universal ribosomal protein uL5 family. As to quaternary structure, part of the 50S ribosomal subunit; part of the 5S rRNA/L5/L18/L25 subcomplex. Contacts the 5S rRNA and the P site tRNA. Forms a bridge to the 30S subunit in the 70S ribosome.

In terms of biological role, this is one of the proteins that bind and probably mediate the attachment of the 5S RNA into the large ribosomal subunit, where it forms part of the central protuberance. In the 70S ribosome it contacts protein S13 of the 30S subunit (bridge B1b), connecting the two subunits; this bridge is implicated in subunit movement. Contacts the P site tRNA; the 5S rRNA and some of its associated proteins might help stabilize positioning of ribosome-bound tRNAs. This is Large ribosomal subunit protein uL5 (rplE) from Bacillus cereus.